We begin with the raw amino-acid sequence, 515 residues long: Pisatin demethylase (515 aa).

Cys-453 provides a ligand contact to heme.

This sequence belongs to the cytochrome P450 family. Heme is required as a cofactor.

Functionally, can detoxify the phytoalexin pisatin from garden pea. Pisatin is an antimicrobial compound produced by pea in response to infection by plant pathogens. This Fusarium vanettenii (Neocosmospora pisi) protein is Pisatin demethylase (PDAT9).